The following is a 141-amino-acid chain: Lysozyme 1 (141 aa).

The signal sequence occupies residues 1-19 (MKFFIVLVAALALAAPAMG). The C-type lysozyme domain occupies 20-141 (KTFTRCSLAR…GSLPSINDCF (122 aa)). 4 disulfide bridges follow: C25–C140, C46–C130, C81–C97, and C93–C111. Residue E51 is part of the active site. Residue N65 is glycosylated (N-linked (GlcNAc...) asparagine). D69 is a catalytic residue. Residue N104 is glycosylated (N-linked (GlcNAc...) asparagine).

Belongs to the glycosyl hydrolase 22 family.

It catalyses the reaction Hydrolysis of (1-&gt;4)-beta-linkages between N-acetylmuramic acid and N-acetyl-D-glucosamine residues in a peptidoglycan and between N-acetyl-D-glucosamine residues in chitodextrins.. Its function is as follows. May not function as a self-defense protein, but as a digestive enzyme, probably in the gut of the insect body. Inactive towards Micrococcus luteus. Active toward glycol chitin. The polypeptide is Lysozyme 1 (Musca domestica (House fly)).